Here is a 288-residue protein sequence, read N- to C-terminus: Ankyrin repeat and SOCS box protein 8 (288 aa).

At serine 17 the chain carries Phosphoserine. ANK repeat units follow at residues 52-81, 85-113, 117-146, and 150-179; these read GTLKPLHCACMVSDADCVELLLEKGAEVNA, YNRTALHYAAEKDEACVEVLLEYGANPNA, NRDTPLHWAAFKNNAECVRALLESGASVNA, and NNDTPLSWAAMKGNLESVSILLDYGAEVRV. The region spanning 235 to 288 is the SOCS box domain; it reads QLCEKLTVLCSAPGTLKTLARYTVRRSLGLQYLPDAVKGLPLPASLKEYLLLLE.

This sequence belongs to the ankyrin SOCS box (ASB) family. As to quaternary structure, interacts with TBK1; this interaction promotes TBK1 proteasomal degradation. Post-translationally, phosphorylated by TBK1.

It localises to the cytoplasm. It functions in the pathway protein modification; protein ubiquitination. Functionally, may be a substrate-recognition component of a SCF-like ECS (Elongin-Cullin-SOCS-box protein) E3 ubiquitin-protein ligase complex which mediates the ubiquitination and subsequent proteasomal degradation of target proteins. Inhibits IFN-beta production through the IRF3 signaling pathway by targeting TBK1 via 'Lys-48'-linked ubiquitination, leading to its proteasomal degradation. The sequence is that of Ankyrin repeat and SOCS box protein 8 (ASB8) from Pongo abelii (Sumatran orangutan).